A 442-amino-acid polypeptide reads, in one-letter code: tRNA-2-methylthio-N(6)-dimethylallyladenosine synthase (442 aa).

One can recognise an MTTase N-terminal domain in the interval 3–120 (NKLYIRTFGC…LPNMLNDALN (118 aa)). [4Fe-4S] cluster contacts are provided by cysteine 12, cysteine 49, cysteine 83, cysteine 157, cysteine 161, and cysteine 164. In terms of domain architecture, Radical SAM core spans 143–375 (RTNSVTAFVS…QKTINNNTEH (233 aa)). The region spanning 378–440 (QLMIGSIQKV…GNSLMGDLLT (63 aa)) is the TRAM domain.

Belongs to the methylthiotransferase family. MiaB subfamily. Monomer. [4Fe-4S] cluster is required as a cofactor.

Its subcellular location is the cytoplasm. The enzyme catalyses N(6)-dimethylallyladenosine(37) in tRNA + (sulfur carrier)-SH + AH2 + 2 S-adenosyl-L-methionine = 2-methylsulfanyl-N(6)-dimethylallyladenosine(37) in tRNA + (sulfur carrier)-H + 5'-deoxyadenosine + L-methionine + A + S-adenosyl-L-homocysteine + 2 H(+). In terms of biological role, catalyzes the methylthiolation of N6-(dimethylallyl)adenosine (i(6)A), leading to the formation of 2-methylthio-N6-(dimethylallyl)adenosine (ms(2)i(6)A) at position 37 in tRNAs that read codons beginning with uridine. The polypeptide is tRNA-2-methylthio-N(6)-dimethylallyladenosine synthase (Vesicomyosocius okutanii subsp. Calyptogena okutanii (strain HA)).